We begin with the raw amino-acid sequence, 256 residues long: Proteasome subunit beta type-5 (256 aa).

Positions 1 to 55 (CNMALADIVRLPPASEAPFAPLGAPRDLSGPPSKLAVRPWGGADLPGPGLQLLHG) are cleaved as a propeptide — removed in mature form. The active-site Nucleophile is threonine 56.

It belongs to the peptidase T1B family. The 26S proteasome consists of a 20S proteasome core and two 19S regulatory subunits. The 20S proteasome core is a barrel-shaped complex made of 28 subunits that are arranged in four stacked rings. The two outer rings are each formed by seven alpha subunits, and the two inner rings are formed by seven beta subunits. The proteolytic activity is exerted by three beta-subunits PSMB5, PSMB6 and PSMB7. Directly interacts with POMP. Interacts with ABCB1 and TAP1.

The protein resides in the cytoplasm. It is found in the nucleus. It carries out the reaction Cleavage of peptide bonds with very broad specificity.. Component of the 20S core proteasome complex involved in the proteolytic degradation of most intracellular proteins. This complex plays numerous essential roles within the cell by associating with different regulatory particles. Associated with two 19S regulatory particles, forms the 26S proteasome and thus participates in the ATP-dependent degradation of ubiquitinated proteins. The 26S proteasome plays a key role in the maintenance of protein homeostasis by removing misfolded or damaged proteins that could impair cellular functions, and by removing proteins whose functions are no longer required. Associated with the PA200 or PA28, the 20S proteasome mediates ubiquitin-independent protein degradation. This type of proteolysis is required in several pathways including spermatogenesis (20S-PA200 complex) or generation of a subset of MHC class I-presented antigenic peptides (20S-PA28 complex). Within the 20S core complex, PSMB5 displays a chymotrypsin-like activity. The protein is Proteasome subunit beta type-5 (PSMB5) of Gallus gallus (Chicken).